We begin with the raw amino-acid sequence, 64 residues long: Large ribosomal subunit protein bL35 (64 aa).

It belongs to the bacterial ribosomal protein bL35 family.

The sequence is that of Large ribosomal subunit protein bL35 from Lactiplantibacillus plantarum (strain ATCC BAA-793 / NCIMB 8826 / WCFS1) (Lactobacillus plantarum).